Consider the following 838-residue polypeptide: Glycogen phosphorylase, brain form (838 aa).

An N-acetylalanine modification is found at Ala-2. Residue Ser-15 is modified to Phosphoserine. AMP contacts are provided by Asp-43, Tyr-197, and Arg-310. Tyr-197 is subject to Phosphotyrosine. At Tyr-473 the chain carries Phosphotyrosine. The residue at position 524 (Ser-524) is a Phosphoserine. Residue Lys-569 participates in pyridoxal 5'-phosphate binding. The pyridoxal 5'-phosphate stretch occupies residues 677 to 678 (TG). Lys-681 carries the N6-(pyridoxal phosphate)lysine modification.

It belongs to the glycogen phosphorylase family. In terms of assembly, homodimer. Dimers associate into a tetramer to form the enzymatically active phosphorylase A. The cofactor is pyridoxal 5'-phosphate. Phosphorylation of Ser-15 converts phosphorylase B (unphosphorylated) to phosphorylase A.

The enzyme catalyses [(1-&gt;4)-alpha-D-glucosyl](n) + phosphate = [(1-&gt;4)-alpha-D-glucosyl](n-1) + alpha-D-glucose 1-phosphate. Activity of phosphorylase is controlled both by allosteric means (through the non-covalent binding of metabolites) and by covalent modification. Thus AMP allosterically activates, whereas ATP, ADP, and glucose-6-phosphate allosterically inhibit, phosphorylase B. In terms of biological role, glycogen phosphorylase that regulates glycogen mobilization. Phosphorylase is an important allosteric enzyme in carbohydrate metabolism. Enzymes from different sources differ in their regulatory mechanisms and in their natural substrates. However, all known phosphorylases share catalytic and structural properties. The chain is Glycogen phosphorylase, brain form (Pygb) from Rattus norvegicus (Rat).